We begin with the raw amino-acid sequence, 158 residues long: Deoxyuridine 5'-triphosphate nucleotidohydrolase (158 aa).

Substrate is bound by residues 75-77 (RSG), N88, 92-94 (TVD), and K102.

The protein belongs to the dUTPase family. Requires Mg(2+) as cofactor.

The catalysed reaction is dUTP + H2O = dUMP + diphosphate + H(+). It functions in the pathway pyrimidine metabolism; dUMP biosynthesis; dUMP from dCTP (dUTP route): step 2/2. Functionally, this enzyme is involved in nucleotide metabolism: it produces dUMP, the immediate precursor of thymidine nucleotides and it decreases the intracellular concentration of dUTP so that uracil cannot be incorporated into DNA. This is Deoxyuridine 5'-triphosphate nucleotidohydrolase from Bifidobacterium longum (strain DJO10A).